Here is a 201-residue protein sequence, read N- to C-terminus: Outer-membrane lipoprotein carrier protein (201 aa).

The first 21 residues, 1–21, serve as a signal peptide directing secretion; it reads MKKVLLTVCAIALFGSQAAWA.

The protein belongs to the LolA family. In terms of assembly, monomer.

The protein resides in the periplasm. Participates in the translocation of lipoproteins from the inner membrane to the outer membrane. Only forms a complex with a lipoprotein if the residue after the N-terminal Cys is not an aspartate (The Asp acts as a targeting signal to indicate that the lipoprotein should stay in the inner membrane). In Proteus mirabilis (strain HI4320), this protein is Outer-membrane lipoprotein carrier protein.